A 69-amino-acid chain; its full sequence is Putative membrane protein insertion efficiency factor (69 aa).

This sequence belongs to the UPF0161 family.

It is found in the cell inner membrane. Its function is as follows. Could be involved in insertion of integral membrane proteins into the membrane. The chain is Putative membrane protein insertion efficiency factor from Geobacter metallireducens (strain ATCC 53774 / DSM 7210 / GS-15).